Here is a 134-residue protein sequence, read N- to C-terminus: Translation initiation factor 2 subunit beta (134 aa).

Belongs to the eIF-2-beta/eIF-5 family. Heterotrimer composed of an alpha, a beta and a gamma chain.

Functionally, eIF-2 functions in the early steps of protein synthesis by forming a ternary complex with GTP and initiator tRNA. The sequence is that of Translation initiation factor 2 subunit beta from Pyrobaculum arsenaticum (strain DSM 13514 / JCM 11321 / PZ6).